A 592-amino-acid chain; its full sequence is ATP-dependent RNA helicase DBP3 (592 aa).

The segment at 1 to 146 (MGKRPIEDDA…AGSYTEHTEL (146 aa)) is disordered. Positions 19 to 31 (KKSKKEKSGKSKK) are enriched in basic residues. Residues 73-82 (EAKEASKAGK) show a composition bias toward basic and acidic residues. The span at 97-108 (AARKAARKAEKK) shows a compositional bias: basic residues. Polar residues predominate over residues 116–141 (TASSAPTEASSVPAQTLSSSNAGSYT). A Q motif motif is present at residues 179–206 (VNFKYLPVTDESQRAPFAGFTAPTPIQA). The region spanning 209–382 (WPFLLSGRDM…STFMVSPVRI (174 aa)) is the Helicase ATP-binding domain. ATP is bound at residue 222–229 (AETGSGKT). The DEAD box motif lies at 330 to 333 (DEAD). Residues 413 to 562 (RLLQLLKQYQ…EVPEELLKFG (150 aa)) enclose the Helicase C-terminal domain.

Belongs to the DEAD box helicase family. DDX5/DBP2 subfamily.

It is found in the nucleus. The protein localises to the nucleolus. It catalyses the reaction ATP + H2O = ADP + phosphate + H(+). Functionally, ATP-dependent RNA helicase required for 60S ribosomal subunit synthesis. Involved in efficient pre-rRNA processing, predominantly at site A3, which is necessary for the normal formation of 25S and 5.8S rRNAs. In Phaeosphaeria nodorum (strain SN15 / ATCC MYA-4574 / FGSC 10173) (Glume blotch fungus), this protein is ATP-dependent RNA helicase DBP3 (DBP3).